The following is a 118-amino-acid chain: NAD(P)H-quinone oxidoreductase subunit M (118 aa).

This sequence belongs to the complex I NdhM subunit family. As to quaternary structure, NDH-1 can be composed of about 15 different subunits; different subcomplexes with different compositions have been identified which probably have different functions.

The protein localises to the cellular thylakoid membrane. The enzyme catalyses a plastoquinone + NADH + (n+1) H(+)(in) = a plastoquinol + NAD(+) + n H(+)(out). It carries out the reaction a plastoquinone + NADPH + (n+1) H(+)(in) = a plastoquinol + NADP(+) + n H(+)(out). NDH-1 shuttles electrons from an unknown electron donor, via FMN and iron-sulfur (Fe-S) centers, to quinones in the respiratory and/or the photosynthetic chain. The immediate electron acceptor for the enzyme in this species is believed to be plastoquinone. Couples the redox reaction to proton translocation, and thus conserves the redox energy in a proton gradient. Cyanobacterial NDH-1 also plays a role in inorganic carbon-concentration. This Trichormus variabilis (strain ATCC 29413 / PCC 7937) (Anabaena variabilis) protein is NAD(P)H-quinone oxidoreductase subunit M.